The primary structure comprises 291 residues: Elongation factor Ts (291 aa).

Residues Thr78 to Val81 form an involved in Mg(2+) ion dislocation from EF-Tu region.

It belongs to the EF-Ts family.

Its subcellular location is the cytoplasm. In terms of biological role, associates with the EF-Tu.GDP complex and induces the exchange of GDP to GTP. It remains bound to the aminoacyl-tRNA.EF-Tu.GTP complex up to the GTP hydrolysis stage on the ribosome. The polypeptide is Elongation factor Ts (Ureaplasma parvum serovar 3 (strain ATCC 27815 / 27 / NCTC 11736)).